Reading from the N-terminus, the 493-residue chain is Glutamyl-tRNA(Gln) amidotransferase subunit A (493 aa).

Catalysis depends on charge relay system residues Lys81 and Ser156. Residue Ser180 is the Acyl-ester intermediate of the active site.

It belongs to the amidase family. GatA subfamily. In terms of assembly, heterotrimer of A, B and C subunits.

The enzyme catalyses L-glutamyl-tRNA(Gln) + L-glutamine + ATP + H2O = L-glutaminyl-tRNA(Gln) + L-glutamate + ADP + phosphate + H(+). Allows the formation of correctly charged Gln-tRNA(Gln) through the transamidation of misacylated Glu-tRNA(Gln) in organisms which lack glutaminyl-tRNA synthetase. The reaction takes place in the presence of glutamine and ATP through an activated gamma-phospho-Glu-tRNA(Gln). The protein is Glutamyl-tRNA(Gln) amidotransferase subunit A of Mycobacterium avium (strain 104).